The sequence spans 239 residues: DNA repair protein RecO (239 aa).

This sequence belongs to the RecO family.

Its function is as follows. Involved in DNA repair and RecF pathway recombination. This chain is DNA repair protein RecO, found in Tolumonas auensis (strain DSM 9187 / NBRC 110442 / TA 4).